Reading from the N-terminus, the 315-residue chain is Methionyl-tRNA formyltransferase (315 aa).

113 to 116 (SLLP) contributes to the (6S)-5,6,7,8-tetrahydrofolate binding site.

The protein belongs to the Fmt family.

The catalysed reaction is L-methionyl-tRNA(fMet) + (6R)-10-formyltetrahydrofolate = N-formyl-L-methionyl-tRNA(fMet) + (6S)-5,6,7,8-tetrahydrofolate + H(+). Functionally, attaches a formyl group to the free amino group of methionyl-tRNA(fMet). The formyl group appears to play a dual role in the initiator identity of N-formylmethionyl-tRNA by promoting its recognition by IF2 and preventing the misappropriation of this tRNA by the elongation apparatus. The sequence is that of Methionyl-tRNA formyltransferase from Yersinia enterocolitica serotype O:8 / biotype 1B (strain NCTC 13174 / 8081).